Consider the following 284-residue polypeptide: MTAKLIDGKAIAASLRQQIAQCVAERRQQGLRAPGLAVILVGTDPASQVYVSHKRKDCEEVGFHSRAYDLPASTTQGELLSLIDRLNEDSAIDGILVQLPLPVHLDASLLLERIRPDKDVDGFHPYNIGRLAQRMPLLRPCTPKGIMTLLQSTGANLYGLDATVVGASNIVGRPMALELLLAGCTVTVTHRFTRNLAEHVSRADLVIAAAGKPGLVKGEWIKPGAIVIDVGINRLDDGRLVGDVEFSSAAARAEWITPVPGGVGPMTRACLLENTLHAAEQLHR.

NADP(+)-binding positions include 166–168 (GAS) and I232.

It belongs to the tetrahydrofolate dehydrogenase/cyclohydrolase family. Homodimer.

It catalyses the reaction (6R)-5,10-methylene-5,6,7,8-tetrahydrofolate + NADP(+) = (6R)-5,10-methenyltetrahydrofolate + NADPH. The enzyme catalyses (6R)-5,10-methenyltetrahydrofolate + H2O = (6R)-10-formyltetrahydrofolate + H(+). The protein operates within one-carbon metabolism; tetrahydrofolate interconversion. Catalyzes the oxidation of 5,10-methylenetetrahydrofolate to 5,10-methenyltetrahydrofolate and then the hydrolysis of 5,10-methenyltetrahydrofolate to 10-formyltetrahydrofolate. This chain is Bifunctional protein FolD, found in Azotobacter vinelandii (strain DJ / ATCC BAA-1303).